The sequence spans 412 residues: Delta-aminolevulinic acid dehydratase, chloroplastic (412 aa).

The N-terminal 48 residues, 1–48, are a transit peptide targeting the chloroplast; it reads MASSIPNAPSAFNSQSYVGLRAPLRTFNFSSPQAAKIPRSQRLFVVRA. Positions 68–101 are disordered; it reads VRPRPAAPVGTPVVPSLPLHRRPRRNRKSPALRS. Over residues 86–97 the composition is skewed to basic residues; it reads LHRRPRRNRKSP. The Schiff-base intermediate with substrate role is filled by Lys280. 5-aminolevulinate is bound by residues Arg290 and Lys302. Position 318 (Glu318) interacts with Mg(2+). Lys333 functions as the Schiff-base intermediate with substrate in the catalytic mechanism. Positions 359 and 398 each coordinate 5-aminolevulinate.

Belongs to the ALAD family. Homooctamer. Requires Mg(2+) as cofactor. Leaves and root nodules.

Its subcellular location is the plastid. It is found in the chloroplast. The enzyme catalyses 2 5-aminolevulinate = porphobilinogen + 2 H2O + H(+). The protein operates within porphyrin-containing compound metabolism; protoporphyrin-IX biosynthesis; coproporphyrinogen-III from 5-aminolevulinate: step 1/4. Its function is as follows. Is committed to plant tetrapyrrole synthesis. Functionally, catalyzes an early step in the biosynthesis of tetrapyrroles. Binds two molecules of 5-aminolevulinate per subunit, each at a distinct site, and catalyzes their condensation to form porphobilinogen. The protein is Delta-aminolevulinic acid dehydratase, chloroplastic (HEMB) of Glycine max (Soybean).